The primary structure comprises 330 residues: MYTEINEMLTPKVLKVQAESPYKARIVLEPLERGFGHTLGNALRRILLSSMPGSAITEASIDGVLHEYSTIEGVQEDVVDLLLNLKSVAIKLTVGNEAQITLNKEGPCQVTAGDIQLTHGQEIINPELVIANLNEKGKLNMTLKVERGIGFHNTDAFVRYHDDEIEKKTVGKLKIDNSFSPVKKVAYFVDSARVENRTDLDKLTIELETNGTIDAEEAIRISASILQRQLHAFVDMKFEESRADNKERNDFDPVLLRSVDDLELTVRSANCLKAENIHYIGDLVQRTESELLKTPNLGKKSLTEIKDVLASRSLSLGMKLENWPPASLGE.

Residues 1–237 (MYTEINEMLT…RQLHAFVDMK (237 aa)) are alpha N-terminal domain (alpha-NTD). An alpha C-terminal domain (alpha-CTD) region spans residues 251-330 (FDPVLLRSVD…ENWPPASLGE (80 aa)).

This sequence belongs to the RNA polymerase alpha chain family. Homodimer. The RNAP catalytic core consists of 2 alpha, 1 beta, 1 beta' and 1 omega subunit. When a sigma factor is associated with the core the holoenzyme is formed, which can initiate transcription.

The enzyme catalyses RNA(n) + a ribonucleoside 5'-triphosphate = RNA(n+1) + diphosphate. DNA-dependent RNA polymerase catalyzes the transcription of DNA into RNA using the four ribonucleoside triphosphates as substrates. In Legionella pneumophila subsp. pneumophila (strain Philadelphia 1 / ATCC 33152 / DSM 7513), this protein is DNA-directed RNA polymerase subunit alpha.